We begin with the raw amino-acid sequence, 92 residues long: Large ribosomal subunit protein bL34m (92 aa).

A mitochondrion-targeting transit peptide spans 1 to 46 (MAVLAGSLLGPTSRSAALLGGRWLQPRAWLGFPDAWGLPTPQQARG). Position 71 is a phosphoserine (S71).

The protein belongs to the bacterial ribosomal protein bL34 family. In terms of assembly, component of the mitochondrial large ribosomal subunit (mt-LSU). Mature mammalian 55S mitochondrial ribosomes consist of a small (28S) and a large (39S) subunit. The 28S small subunit contains a 12S ribosomal RNA (12S mt-rRNA) and 30 different proteins. The 39S large subunit contains a 16S rRNA (16S mt-rRNA), a copy of mitochondrial valine transfer RNA (mt-tRNA(Val)), which plays an integral structural role, and 52 different proteins.

Its subcellular location is the mitochondrion. This Homo sapiens (Human) protein is Large ribosomal subunit protein bL34m (MRPL34).